The following is a 595-amino-acid chain: RuBisCO large subunit-binding protein subunit beta, chloroplastic (595 aa).

The transit peptide at 1–49 (MASTFSATTSSCNLSSSAAISSFPLAAGKRNANKVVLPRKNRNVKVSAM) directs the protein to the chloroplast.

This sequence belongs to the chaperonin (HSP60) family. As to quaternary structure, oligomer of probably six alpha and six beta subunits.

It localises to the plastid. Its subcellular location is the chloroplast. In terms of biological role, this protein binds RuBisCO small and large subunits and is implicated in the assembly of the enzyme oligomer. The protein is RuBisCO large subunit-binding protein subunit beta, chloroplastic of Pisum sativum (Garden pea).